The following is a 142-amino-acid chain: Large ribosomal subunit protein uL13 (142 aa).

It belongs to the universal ribosomal protein uL13 family. As to quaternary structure, part of the 50S ribosomal subunit.

In terms of biological role, this protein is one of the early assembly proteins of the 50S ribosomal subunit, although it is not seen to bind rRNA by itself. It is important during the early stages of 50S assembly. The polypeptide is Large ribosomal subunit protein uL13 (Cupriavidus necator (strain ATCC 17699 / DSM 428 / KCTC 22496 / NCIMB 10442 / H16 / Stanier 337) (Ralstonia eutropha)).